The chain runs to 292 residues: Elongation factor Ts (292 aa).

The segment at 80 to 83 is involved in Mg(2+) ion dislocation from EF-Tu; the sequence is TDFV.

It belongs to the EF-Ts family.

The protein resides in the cytoplasm. Its function is as follows. Associates with the EF-Tu.GDP complex and induces the exchange of GDP to GTP. It remains bound to the aminoacyl-tRNA.EF-Tu.GTP complex up to the GTP hydrolysis stage on the ribosome. In Tolumonas auensis (strain DSM 9187 / NBRC 110442 / TA 4), this protein is Elongation factor Ts.